A 201-amino-acid chain; its full sequence is ATP-dependent Clp protease proteolytic subunit (201 aa).

The Nucleophile role is filled by Ser101. His126 is a catalytic residue.

Belongs to the peptidase S14 family. As to quaternary structure, component of the chloroplastic Clp protease core complex.

It localises to the plastid. The protein resides in the chloroplast stroma. It catalyses the reaction Hydrolysis of proteins to small peptides in the presence of ATP and magnesium. alpha-casein is the usual test substrate. In the absence of ATP, only oligopeptides shorter than five residues are hydrolyzed (such as succinyl-Leu-Tyr-|-NHMec, and Leu-Tyr-Leu-|-Tyr-Trp, in which cleavage of the -Tyr-|-Leu- and -Tyr-|-Trp bonds also occurs).. In terms of biological role, cleaves peptides in various proteins in a process that requires ATP hydrolysis. Has a chymotrypsin-like activity. Plays a major role in the degradation of misfolded proteins. The polypeptide is ATP-dependent Clp protease proteolytic subunit (Chaetosphaeridium globosum (Charophycean green alga)).